The following is a 563-amino-acid chain: Arginine--tRNA ligase (563 aa).

A 'HIGH' region motif is present at residues 121–131; the sequence is PNIAKPFSIGH.

This sequence belongs to the class-I aminoacyl-tRNA synthetase family. As to quaternary structure, monomer.

Its subcellular location is the cytoplasm. It catalyses the reaction tRNA(Arg) + L-arginine + ATP = L-arginyl-tRNA(Arg) + AMP + diphosphate. This chain is Arginine--tRNA ligase, found in Streptococcus agalactiae serotype III (strain NEM316).